Consider the following 454-residue polypeptide: Mediator of RNA polymerase II transcription subunit 1 (454 aa).

It belongs to the Mediator complex subunit 1 family. In terms of assembly, component of the Mediator complex.

The protein resides in the nucleus. In terms of biological role, component of the Mediator complex, a coactivator involved in the regulated transcription of nearly all RNA polymerase II-dependent genes. Mediator functions as a bridge to convey information from gene-specific regulatory proteins to the basal RNA polymerase II transcription machinery. Mediator is recruited to promoters by direct interactions with regulatory proteins and serves as a scaffold for the assembly of a functional preinitiation complex with RNA polymerase II and the general transcription factors. In Schizosaccharomyces pombe (strain 972 / ATCC 24843) (Fission yeast), this protein is Mediator of RNA polymerase II transcription subunit 1 (med1).